A 599-amino-acid polypeptide reads, in one-letter code: Dehydrogenase eriK (599 aa).

A signal peptide spans 1 to 20; the sequence is MAFLKARLAALLSVAVSCSA. Residues 43–44 and 64–65 each bind FAD; these read TA and EG. A glycan (N-linked (GlcNAc...) asparagine) is linked at asparagine 93. 122–125 is an FAD binding site; it reads NGMY. Residues asparagine 169, asparagine 191, asparagine 234, asparagine 260, asparagine 284, asparagine 319, asparagine 339, asparagine 353, asparagine 365, asparagine 370, asparagine 398, asparagine 456, and asparagine 518 are each glycosylated (N-linked (GlcNAc...) asparagine). FAD-binding positions include alanine 569 and 580–581; that span reads TQ.

It belongs to the GMC oxidoreductase family. Homodimer. Requires FAD as cofactor.

Dehydrogenase; part of the gene cluster that mediates the biosynthesis of erinacines, cyathane-xylosides that show unique biological activities, including leishmanicidal activity, stimulating activity for nerve growth-factor synthesis, and agonistic activity toward the kappa opioid receptor. The role of the dehydrogenase eriK within the pathway has still to be determined. The first step of the erinacines biosynthesis pathway is catalyzed by the geranylgeranyl diphosphate (GGPP) synthase eriE via conversion of farnesyl pyrophosphate and isopentyl pyrophosphate into geranylgeranyl pyrophosphate (GGPP). GGPP is then substrate of the diterpene cyclase eriG for the production of cyatha-3,12-diene. The cytochrome P450 monooxygenase eriI then hydroxylates cyatha-3,12-diene at C-14 of the seven-membered ring to produce erinacol, which is further hydroxylated at C-15 by the cytochrome P450 monooxygenase eriC to yield cyathadiol. The cytochrome P450 monooxygenase eriA then catalyzes C-11 hydroxylation in the presence of the short chain dehydrogenase/reductase (SDR) eriH, which leads to the production of cyathatriol. The acetyltransferase eriL converts cyathatriol into 11-O-acetyl-cyathatriol. The SDR eriH catalyzes further oxidation of 11-O-acetyl-cyathatriol into 1-O-acetylcyathin A3. Finally, the glycosyl transferase eriJ tranfers xylose from UDP-xylose onto C-14 of 11-O-acetyl-cyathatriol to form eracine Q. EriJ is also able to convert 11-O-acetyl-cyathatriol to eracine Q2 by using UDP-D-glucose as cosubstrate, but at a lower rate. The protein is Dehydrogenase eriK of Hericium erinaceus (Lion's mane mushroom).